The sequence spans 237 residues: UDP-2,3-diacylglucosamine hydrolase (237 aa).

Asp-9, His-11, Asp-42, Asn-80, and His-115 together coordinate Mn(2+). A substrate-binding site is contributed by 80–81 (NR). Residues Asp-123, Ser-161, Lys-165, Lys-168, and His-196 each coordinate substrate. Residues His-196 and His-198 each coordinate Mn(2+).

This sequence belongs to the LpxH family. The cofactor is Mn(2+).

It localises to the cell inner membrane. The protein resides in the cytoplasm. The catalysed reaction is UDP-2-N,3-O-bis[(3R)-3-hydroxytetradecanoyl]-alpha-D-glucosamine + H2O = 2-N,3-O-bis[(3R)-3-hydroxytetradecanoyl]-alpha-D-glucosaminyl 1-phosphate + UMP + 2 H(+). It participates in glycolipid biosynthesis; lipid IV(A) biosynthesis; lipid IV(A) from (3R)-3-hydroxytetradecanoyl-[acyl-carrier-protein] and UDP-N-acetyl-alpha-D-glucosamine: step 4/6. Hydrolyzes the pyrophosphate bond of UDP-2,3-diacylglucosamine to yield 2,3-diacylglucosamine 1-phosphate (lipid X) and UMP by catalyzing the attack of water at the alpha-P atom. Involved in the biosynthesis of lipid A, a phosphorylated glycolipid that anchors the lipopolysaccharide to the outer membrane of the cell. The chain is UDP-2,3-diacylglucosamine hydrolase from Haemophilus influenzae (strain ATCC 51907 / DSM 11121 / KW20 / Rd).